Reading from the N-terminus, the 146-residue chain is Snaclec CTL-Eoc124 (146 aa).

Positions 1–23 are cleaved as a signal peptide; the sequence is MGRFISVSFGLLVVFLSLSGTGA. Disulfide bonds link Cys25–Cys36, Cys53–Cys142, and Cys119–Cys134. One can recognise a C-type lectin domain in the interval 32-143; the sequence is YQGHCYRVFN…CSRTNNVACK (112 aa).

The protein belongs to the snaclec family. As to quaternary structure, heterodimer; disulfide-linked. As to expression, expressed by the venom gland.

The protein localises to the secreted. Interferes with one step of hemostasis (modulation of platelet aggregation, or coagulation cascade, for example). This chain is Snaclec CTL-Eoc124, found in Echis ocellatus (Ocellated saw-scaled viper).